The following is a 110-amino-acid chain: Putative pterin-4-alpha-carbinolamine dehydratase (110 aa).

It belongs to the pterin-4-alpha-carbinolamine dehydratase family.

The catalysed reaction is (4aS,6R)-4a-hydroxy-L-erythro-5,6,7,8-tetrahydrobiopterin = (6R)-L-erythro-6,7-dihydrobiopterin + H2O. In Vibrio vulnificus (strain CMCP6), this protein is Putative pterin-4-alpha-carbinolamine dehydratase.